We begin with the raw amino-acid sequence, 271 residues long: Putative phosphoenolpyruvate synthase regulatory protein (271 aa).

Glycine 151–threonine 158 contributes to the ADP binding site.

The protein belongs to the pyruvate, phosphate/water dikinase regulatory protein family. PSRP subfamily.

It catalyses the reaction [pyruvate, water dikinase] + ADP = [pyruvate, water dikinase]-phosphate + AMP + H(+). It carries out the reaction [pyruvate, water dikinase]-phosphate + phosphate + H(+) = [pyruvate, water dikinase] + diphosphate. Functionally, bifunctional serine/threonine kinase and phosphorylase involved in the regulation of the phosphoenolpyruvate synthase (PEPS) by catalyzing its phosphorylation/dephosphorylation. The polypeptide is Putative phosphoenolpyruvate synthase regulatory protein (Burkholderia lata (strain ATCC 17760 / DSM 23089 / LMG 22485 / NCIMB 9086 / R18194 / 383)).